A 248-amino-acid chain; its full sequence is Ubiquinone/menaquinone biosynthesis C-methyltransferase UbiE (248 aa).

Residues Ser68, Asp92, and 120–121 (NA) each bind S-adenosyl-L-methionine.

It belongs to the class I-like SAM-binding methyltransferase superfamily. MenG/UbiE family.

The catalysed reaction is a 2-demethylmenaquinol + S-adenosyl-L-methionine = a menaquinol + S-adenosyl-L-homocysteine + H(+). The enzyme catalyses a 2-methoxy-6-(all-trans-polyprenyl)benzene-1,4-diol + S-adenosyl-L-methionine = a 5-methoxy-2-methyl-3-(all-trans-polyprenyl)benzene-1,4-diol + S-adenosyl-L-homocysteine + H(+). Its pathway is quinol/quinone metabolism; menaquinone biosynthesis; menaquinol from 1,4-dihydroxy-2-naphthoate: step 2/2. It functions in the pathway cofactor biosynthesis; ubiquinone biosynthesis. In terms of biological role, methyltransferase required for the conversion of demethylmenaquinol (DMKH2) to menaquinol (MKH2) and the conversion of 2-polyprenyl-6-methoxy-1,4-benzoquinol (DDMQH2) to 2-polyprenyl-3-methyl-6-methoxy-1,4-benzoquinol (DMQH2). The sequence is that of Ubiquinone/menaquinone biosynthesis C-methyltransferase UbiE from Rickettsia prowazekii (strain Madrid E).